A 568-amino-acid polypeptide reads, in one-letter code: MNGEESFVEDCSVFVEIDPSGRYGRYDEILGKGASKTVYRAFDEYEGIEVAWNQVKLRNFTRNPEELEKFFREIHLLKTLNHQNIMKFYTSWVDTNNLSINFVTELFTSGTLRQYRLRHRRVNIRAVKQWCKQILKGLLYLHSRSPPIIHRDLKCDNIFINGNQGEVKIGDLGLAAILRKSHAVRCVGTPEFMAPEVYDEEYNELVDVYAFGMCVLEMVTFDYPYSECTHPAQIYKKVTSGKKPEAFYLVKDPEVREFVEKCLANVTCRLTALELLQDPFLQDDNMDGFVMRPIDYYNGYDETGVFLRHPLIDDPLYHDQFESSQICEIDLFANDDEDHVDISIKGKRNGDDGIFLRLRISDAEGRIRNIYFPFETAIDTAWSVAVEMVSELDITNQDVAKIAEMIDAEIAALVPDWKNDTESSQNVNNNKNNNTAGFCGECASNGYIQETVSSGEKSHHNHHEFDSSEDKSCSSVHGRFADMWGLRESYSDDGEKQSSRKVRSGRWSENEMRRELRWLKARHKIQLMKMRGQTICETPIEISLTPGTSVSLPLLYRAISLPVDAVDM.

Residues 24 to 281 (GRYDEILGKG…ALELLQDPFL (258 aa)) form the Protein kinase domain. ATP contacts are provided by residues 104–107 (TELF) and K154. Catalysis depends on D171, which acts as the Proton acceptor. The disordered stretch occupies residues 453–473 (SSGEKSHHNHHEFDSSEDKSC). Over residues 463–472 (HEFDSSEDKS) the composition is skewed to basic and acidic residues.

The protein belongs to the protein kinase superfamily. Ser/Thr protein kinase family. WNK subfamily. Post-translationally, autophosphorylated.

The catalysed reaction is L-seryl-[protein] + ATP = O-phospho-L-seryl-[protein] + ADP + H(+). The enzyme catalyses L-threonyl-[protein] + ATP = O-phospho-L-threonyl-[protein] + ADP + H(+). Functionally, regulates flowering time by modulating the photoperiod pathway. Possesses kinase activity in vitro. This is Serine/threonine-protein kinase WNK2 (WNK2) from Arabidopsis thaliana (Mouse-ear cress).